The following is a 151-amino-acid chain: Globin (151 aa).

A Globin domain is found at 2 to 151; that stretch reads SLSDADKKAL…AAFNETLKKA (150 aa). H100 is a binding site for heme b.

The protein belongs to the globin family.

This Biomphalaria glabrata (Bloodfluke planorb) protein is Globin.